A 940-amino-acid polypeptide reads, in one-letter code: DNA gyrase subunit A (940 aa).

The disordered stretch occupies residues 1–22 (MSDHTNPPSAPPDDDPNGGSLL). Positions 48-538 (LPDARDGLKP…SLADQDDESL (491 aa)) constitute a Topo IIA-type catalytic domain. Tyrosine 136 (O-(5'-phospho-DNA)-tyrosine intermediate) is an active-site residue. Residues 565–571 (QHRGGRG) carry the GyrA-box motif. Acidic residues predominate over residues 914 to 924 (ESVDDNGDDAD). Residues 914-940 (ESVDDNGDDADSVAPAAPDGQVTDSDD) are disordered.

Belongs to the type II topoisomerase GyrA/ParC subunit family. As to quaternary structure, heterotetramer, composed of two GyrA and two GyrB chains. In the heterotetramer, GyrA contains the active site tyrosine that forms a transient covalent intermediate with DNA, while GyrB binds cofactors and catalyzes ATP hydrolysis.

Its subcellular location is the cytoplasm. The enzyme catalyses ATP-dependent breakage, passage and rejoining of double-stranded DNA.. In terms of biological role, a type II topoisomerase that negatively supercoils closed circular double-stranded (ds) DNA in an ATP-dependent manner to modulate DNA topology and maintain chromosomes in an underwound state. Negative supercoiling favors strand separation, and DNA replication, transcription, recombination and repair, all of which involve strand separation. Also able to catalyze the interconversion of other topological isomers of dsDNA rings, including catenanes and knotted rings. Type II topoisomerases break and join 2 DNA strands simultaneously in an ATP-dependent manner. The protein is DNA gyrase subunit A of Granulibacter bethesdensis (strain ATCC BAA-1260 / CGDNIH1).